Here is a 56-residue protein sequence, read N- to C-terminus: Large ribosomal subunit protein bL33 (56 aa).

This sequence belongs to the bacterial ribosomal protein bL33 family.

The sequence is that of Large ribosomal subunit protein bL33 from Helicobacter hepaticus (strain ATCC 51449 / 3B1).